A 176-amino-acid chain; its full sequence is Cytochrome b561 homolog 1 (176 aa).

Residues 1 to 7 are Cytoplasmic-facing; it reads MNRFSKT. Residues 8–28 form a helical membrane-spanning segment; the sequence is QIYLHWITLLFVAITYAAMEL. Heme b is bound at residue His-12. The Periplasmic portion of the chain corresponds to 29–45; that stretch reads RGWFPKGSSTYLLMRET. Position 46 (His-46) interacts with heme b. Residues 46-63 traverse the membrane as a helical segment; that stretch reads HYNAGIFVWVLMFSRLII. Topologically, residues 64 to 85 are cytoplasmic; that stretch reads KHRYSDPSIVPPPPAWQMKAAS. A helical transmembrane segment spans residues 86 to 106; sequence LMHIMLYITFLALPLLGIALM. Over 107-141 the chain is Periplasmic; sequence AYSGKSWSFLGFNVSPFVTPNSEIKALIKNIHETW. Heme b-binding residues include His-138 and His-152. The chain crosses the membrane as a helical span at residues 142–162; the sequence is ANIGYFLIAAHAGAALFHHYI. Over 163–176 the chain is Cytoplasmic; it reads QKDNTLLRMMPRRK.

Belongs to the cytochrome b561 family. Heme b is required as a cofactor.

It is found in the cell inner membrane. This is Cytochrome b561 homolog 1 (yodB) from Escherichia coli (strain K12).